Reading from the N-terminus, the 400-residue chain is MTMRSKFSIDRVLHDTAFAKWCQKEESRNADSITLYTSILDFESKLKTGSPSLSLLKLARHIHRKYVSLNTGTCHVIGDSIRTKISTRVHEVLDGKPPYIDLFDPLKQPLFQHLRSMHTEFSTTTADVNTTWEDASSTSSSNKGATIWFNEDAIDKSSRHEIGQSTVTHESEDDRFSFFNAVCTRLNSLQETKNSSETEEHAESPRKEKSSTPYGTDGFAPPPRSTQTNTLKVSNLPKRFESLYKKKRQQVATSDSSGFGSNASDFWSFERYGKSNQGTLERPNRLFTGTNNGFSTLQPKRRGSEAPKMTVELRYENDVPMVAKISANHAQSVTLRYFRHLFGLHYTDNCRFFFKSTCEDGSAQYQWTLLFHDDDILPVFQNRITAICRMCPPPEDHDLI.

The 129-residue stretch at 4–132 (RSKFSIDRVL…TTTADVNTTW (129 aa)) folds into the RGS domain. Disordered regions lie at residues 190–233 (QETK…TLKV) and 278–306 (GTLE…GSEA). Positions 194-210 (NSSETEEHAESPRKEKS) are enriched in basic and acidic residues. The segment covering 287 to 298 (FTGTNNGFSTLQ) has biased composition (polar residues). The 88-residue stretch at 305-392 (EAPKMTVELR…RITAICRMCP (88 aa)) folds into the DIX domain.

Interacts with bar-1, dsh-2, gsk-3, and mig-5.

Functionally, works in parallel with pry-1 in negatively regulating bar-1 signaling in vulval precursor cells and Q neuroblasts. Shown to have a role in excretory cell development. This chain is Axin-like protein 1, found in Caenorhabditis elegans.